Consider the following 315-residue polypeptide: Porphobilinogen deaminase (315 aa).

At C245 the chain carries S-(dipyrrolylmethanemethyl)cysteine.

It belongs to the HMBS family. As to quaternary structure, monomer. The cofactor is dipyrromethane.

It carries out the reaction 4 porphobilinogen + H2O = hydroxymethylbilane + 4 NH4(+). Its pathway is porphyrin-containing compound metabolism; protoporphyrin-IX biosynthesis; coproporphyrinogen-III from 5-aminolevulinate: step 2/4. It participates in porphyrin-containing compound metabolism; chlorophyll biosynthesis. Tetrapolymerization of the monopyrrole PBG into the hydroxymethylbilane pre-uroporphyrinogen in several discrete steps. The polypeptide is Porphobilinogen deaminase (Prochlorococcus marinus (strain NATL1A)).